A 198-amino-acid chain; its full sequence is Nucleoid occlusion factor SlmA (198 aa).

The HTH tetR-type domain maps to 10–70 (NRREEILQSL…SLIEFIEDSL (61 aa)). The segment at residues 33–52 (TTAKLAASVGVSEAALYRHF) is a DNA-binding region (H-T-H motif). The stretch at 117-144 (EQDRLQGRINQLFERIEAQLRQVLREKR) forms a coiled coil.

This sequence belongs to the nucleoid occlusion factor SlmA family. Homodimer. Interacts with FtsZ.

It is found in the cytoplasm. Its subcellular location is the nucleoid. In terms of biological role, required for nucleoid occlusion (NO) phenomenon, which prevents Z-ring formation and cell division over the nucleoid. Acts as a DNA-associated cell division inhibitor that binds simultaneously chromosomal DNA and FtsZ, and disrupts the assembly of FtsZ polymers. SlmA-DNA-binding sequences (SBS) are dispersed on non-Ter regions of the chromosome, preventing FtsZ polymerization at these regions. In Escherichia coli O45:K1 (strain S88 / ExPEC), this protein is Nucleoid occlusion factor SlmA.